The primary structure comprises 159 residues: Cytochrome P450 monooxygenase aunB (159 aa).

Residue Cys-134 participates in heme binding.

The protein belongs to the cytochrome P450 family. The cofactor is heme.

The catalysed reaction is 2 fonsecin B + NADPH + O2 + H(+) = aurasperone B + NADP(+) + 2 H2O. It catalyses the reaction 2 rubrofusarin B + NADPH + O2 + H(+) = aurasperone A + NADP(+) + 2 H2O. The protein operates within secondary metabolite biosynthesis. In terms of biological role, cytochrome P450 monooxygenase; part of the gene cluster that mediates the biosynthesis of aurasperone B, a dimeric gamma-naphthopyrone. The first step in the biosynthesis of aurasperone B is the production of gamma-naphthopyrone precursor YWA1 by the non-reducing polyketide synthase albA, via condensation of one acetyl-CoA starter unit with 6 malonyl-CoA units. YWA1 is then methylated by aunE at position C-6 to yield foncesin which is further methylated at position C-8 by aunD to produce fonsecin B. A key enzyme in the biosynthetic pathway is the cytochrome P450 monooxygenase aunB which catalyzes the oxidative dimerization of fonsecin B to aurasperone B. AunB also catalyzes the oxidative dimerization of rubrofusarin B into aurasperone A. This is Cytochrome P450 monooxygenase aunB from Aspergillus niger (strain ATCC 1015 / CBS 113.46 / FGSC A1144 / LSHB Ac4 / NCTC 3858a / NRRL 328 / USDA 3528.7).